A 470-amino-acid chain; its full sequence is Cupincin (470 aa).

Residues 1-34 (MAKKKTSSSMARSQLAALLISLCFLSLASNAVGW) form the signal peptide. Residues 36–52 (RRGEREEEDERRRHGGE) are compositionally biased toward basic and acidic residues. Disordered regions lie at residues 36-59 (RRGEREEEDERRRHGGEGGRPYHL) and 240-261 (KSCSRGGGGGSGSEWEIKPSSL). 2 consecutive Cupin type-1 domains span residues 57 to 215 (YHLG…EELE) and 259 to 445 (SSLT…AREA). Residue Asn-297 is glycosylated (N-linked (GlcNAc...) asparagine). A disordered region spans residues 330-368 (PHVSGGGSSERREREREHGRRREEEQGEEEHGERGEKAR). Residues 338–367 (SERREREREHGRRREEEQGEEEHGERGEKA) show a composition bias toward basic and acidic residues. Positions 347, 352, and 360 each coordinate Zn(2+).

Belongs to the 7S seed storage protein family. Homotrimer. Zn(2+) serves as cofactor.

It is found in the secreted. Its function is as follows. Seed storage protein. Globulin-like protein that acts as a zinc metalloprotease. Cleaves specifically between Leu-15 and Tyr-16 of insulin B chain, and Gln-1 and Leu-2 of neurotensin (NT) peptide in vitro. May play a role as an initiating endopeptidase in germinating seeds. The chain is Cupincin from Oryza sativa subsp. japonica (Rice).